The sequence spans 379 residues: Intracellular hyaluronan-binding protein 4.S (379 aa).

Disordered regions lie at residues 52–260 (THRK…FSQE) and 332–379 (SLAR…PALA). The segment covering 71–81 (GKKESQKDRKA) has biased composition (basic and acidic residues). Residues 107–116 (KVTQNENVDS) are compositionally biased toward polar residues. Basic and acidic residues-rich tracts occupy residues 118–133 (VKVD…REVR) and 139–158 (RSAE…DKQM). Residues 162–174 (GGRGGMRGRGRGG) show a composition bias toward gly residues. Basic and acidic residues predominate over residues 179 to 208 (TESDNLRGKREFDRHSGSDRARMRPEDKRG). 2 stretches are compositionally biased toward acidic residues: residues 232 to 241 (EQVETTETEA) and 368 to 379 (NPDDPEDFPALA).

This sequence belongs to the SERBP1-HABP4 family. In terms of assembly, associates with ribosomes; promoting ribosome stabilization. Interacts with eef2/eEF2; promoting ribosome stabilization.

The protein resides in the nucleus. Its subcellular location is the cytoplasm. It localises to the stress granule. The protein localises to the nucleolus. It is found in the nucleus speckle. The protein resides in the cajal body. Its function is as follows. Ribosome-binding protein that promotes ribosome hibernation, a process during which ribosomes are stabilized in an inactive state and preserved from proteasomal degradation. Acts via its association with eef2/eEF2 factor at the A-site of the ribosome, promoting ribosome stabilization in an inactive state compatible with storage. Plays a key role in ribosome hibernation in the mature egg by promoting ribosome stabilization. Ribosomes, which are produced in large quantities during oogenesis, are stored and translationally repressed in the egg and early embryo. The chain is Intracellular hyaluronan-binding protein 4.S from Xenopus laevis (African clawed frog).